Here is a 1854-residue protein sequence, read N- to C-terminus: PKS-NRPS hybrid synthetase ATPKS (1854 aa).

The tract at residues 24–423 (FDQTQTRYSP…GRADTQIKIR (400 aa)) is adenylation (A) domain. In terms of domain architecture, Carrier 1 spans 523-598 (IPASTLTQQL…NLAAYLSDQT (76 aa)). Ser-558 is subject to O-(pantetheine 4'-phosphoryl)serine. A Ketosynthase family 3 (KS3) domain is found at 617–1049 (GEDIAVISMA…GTNAHAIIEE (433 aa)). Residues Cys-791, His-926, and His-967 each act as for beta-ketoacyl synthase activity in the active site. The interval 1162–1496 (LFSGQGTERA…SLSDLHIRKV (335 aa)) is malonyl-CoA:ACP transacylase (MAT) domain. The disordered stretch occupies residues 1536–1556 (KSSGQPSGQSPSGCPQPTGQI). Over residues 1537 to 1555 (SSGQPSGQSPSGCPQPTGQ) the composition is skewed to low complexity. One can recognise a Carrier 2 domain in the interval 1776-1851 (MMLQGLVRGI…SLSDALQKQV (76 aa)). Ser-1811 carries the post-translational modification O-(pantetheine 4'-phosphoryl)serine.

In the C-terminal section; belongs to the NRP synthetase family.

It functions in the pathway secondary metabolite biosynthesis. Its function is as follows. PKS-NRPS hybrid synthetase; part of the gene cluster that mediates the biosynthesis of pyrophen and campyrone B, which represent a class of fungal amino acid-derived alpha-pyrone natural products. The first step of pyrophen biosynthesis is catalyzed by the PKS-NRPS hybrid synthetase ATPKS that uptakes and condensates L-phenylalanine and malonyl-CoA in order to produce desmethyldesacetylpyrophen. Although the A domain does not discriminate between 2 enantiomeric phenylalanines, the downstream KS domain must play a gate keeping role to stereoselectively accept the L-phenylalanyl-S-phosphopantetheine (Ppant)-T domain intermediate for chain elongation. The resulting amino acid derived diketide is off-loaded through lactonization to yield the alpha-pyrone intermediate desmethyldesacetylpyrophen. The cluster-specific O-methyltransferase (OMT) then methylates desmethyldesacetylpyrophen to desacetylpyrophen, which is further acetylated to pyrophen by an endogenous yet unidentified N-acetyltransferase. ATPKS has relaxed substrate specificity to activate and extend branched-chain amino acid L-leucine to produce small amounts of campyrone B. The polypeptide is PKS-NRPS hybrid synthetase ATPKS (Aspergillus niger (strain ATCC 1015 / CBS 113.46 / FGSC A1144 / LSHB Ac4 / NCTC 3858a / NRRL 328 / USDA 3528.7)).